Here is a 157-residue protein sequence, read N- to C-terminus: UPF0758 protein VC_0510 (157 aa).

The MPN domain maps to 36-157; that stretch reads ALTNPDATKE…CTSFAERGWL (122 aa). The Zn(2+) site is built by H107, H109, and D120. The JAMM motif signature appears at 107–120; sequence HNHPSGDSTPSQAD.

Belongs to the UPF0758 family.

The protein is UPF0758 protein VC_0510 of Vibrio cholerae serotype O1 (strain ATCC 39315 / El Tor Inaba N16961).